A 202-amino-acid polypeptide reads, in one-letter code: Recombination protein RecR (202 aa).

The C4-type zinc-finger motif lies at 61–76 (CARCNSFTEDDVCVIC). Residues 84–179 (SLLCIVETPA…KVTRLARGVP (96 aa)) enclose the Toprim domain.

It belongs to the RecR family.

In terms of biological role, may play a role in DNA repair. It seems to be involved in an RecBC-independent recombinational process of DNA repair. It may act with RecF and RecO. The polypeptide is Recombination protein RecR (Bordetella avium (strain 197N)).